A 1327-amino-acid polypeptide reads, in one-letter code: Vascular endothelial growth factor receptor 1 (1327 aa).

The N-terminal stretch at 1 to 24 (MPRQLLSGTVLLGAAFLLAGSTSG) is a signal peptide. The Extracellular portion of the chain corresponds to 25–749 (SKLKVPVLSV…GTVERSNLEL (725 aa)). Ig-like C2-type domains lie at 30-121 (PVLS…SIVY), 120-222 (VYVF…HRET), 227-323 (DIKL…TTVI), 331-417 (NLKR…LTVT), 424-545 (PQIY…RNVS), 552-644 (PSGF…KDVS), and 651-737 (PALL…AYVT). N-linked (GlcNAc...) asparagine glycans are attached at residues Asn-48, Asn-73, Asn-82, Asn-98, and Asn-125. Residues Cys-51 and Cys-105 are joined by a disulfide bond. A disulfide bridge connects residues Cys-154 and Cys-203. Asn-247 is a glycosylation site (N-linked (GlcNAc...) asparagine). Cysteines 248 and 307 form a disulfide. N-linked (GlcNAc...) asparagine glycosylation is found at Asn-319, Asn-383, Asn-398, Asn-409, Asn-413, Asn-470, Asn-512, Asn-543, Asn-593, Asn-615, and Asn-663. The cysteines at positions 450 and 531 are disulfide-linked. Residues Cys-573 and Cys-626 are joined by a disulfide bond. Cys-672 and Cys-721 are oxidised to a cystine. A helical transmembrane segment spans residues 750–770 (ITLTCTCVAATLFWLLLTLFI). Over 771-1327 (RKLKRPYFSE…SVVHYSQPSI (557 aa)) the chain is Cytoplasmic. Positions 819–1151 (LKLGKSLGHG…ELVKRLGDLL (333 aa)) constitute a Protein kinase domain. Residues 825 to 833 (LGHGAFGKV) and Lys-853 each bind ATP. The disordered stretch occupies residues 950-971 (ASVTSSESFASSGFQEDKSLSD). Positions 951 to 961 (SVTSSESFASS) are enriched in low complexity. Residue Asp-1015 is the Proton acceptor of the active site. Residues Tyr-1046, Tyr-1162, Tyr-1202, Tyr-1231, Tyr-1316, and Tyr-1322 each carry the phosphotyrosine; by autocatalysis modification.

The protein belongs to the protein kinase superfamily. Tyr protein kinase family. CSF-1/PDGF receptor subfamily. In terms of assembly, interacts with VEGFA, VEGFB and PGF. Monomer in the absence of bound VEGFA, VEGFB or PGF. Homodimer in the presence of bound VEGFA, VEGFB and PGF. Autophosphorylated on tyrosine residues upon ligand binding.

The protein localises to the cell membrane. It localises to the endosome. Its subcellular location is the secreted. The catalysed reaction is L-tyrosyl-[protein] + ATP = O-phospho-L-tyrosyl-[protein] + ADP + H(+). With respect to regulation, present in an inactive conformation in the absence of bound ligand. Binding of VEGFA, VEGFB or PGF leads to dimerization and activation by autophosphorylation on tyrosine residues. In terms of biological role, tyrosine-protein kinase that acts as a cell-surface receptor for VEGFA, VEGFB and PGF, and plays an essential role in the regulation of angiogenesis, cell survival, cell migration, macrophage function, and chemotaxis. Acts as a positive regulator of postnatal retinal hyaloid vessel regression. Has very high affinity for VEGFA and relatively low protein kinase activity; may function as a negative regulator of VEGFA signaling by limiting the amount of free VEGFA and preventing its binding to KDR. Ligand binding leads to the activation of several signaling cascades. Activation of PLCG1 leads to the production of the cellular signaling molecules diacylglycerol and inositol 1,4,5-trisphosphate and the activation of protein kinase C. Mediates phosphorylation of PIK3R1, the regulatory subunit of phosphatidylinositol 3-kinase, leading to activation of phosphatidylinositol kinase and the downstream signaling pathway. Mediates activation of MAPK1/ERK2, MAPK3/ERK1 and the MAP kinase signaling pathway, as well as of the AKT1 signaling pathway. Phosphorylates PLCG1. Promotes phosphorylation of AKT1 and CBL. The protein is Vascular endothelial growth factor receptor 1 (FLT1) of Gallus gallus (Chicken).